Here is a 511-residue protein sequence, read N- to C-terminus: 60 kDa neurofilament protein (511 aa).

A disordered region spans residues 1-32; it reads MSVTQKKTEISTTTTYEGESRPSSGMSGFSYS. Positions 1 to 99 are head; the sequence is MSVTQKKTEI…KANREREKQD (99 aa). Over residues 21 to 30 the composition is skewed to polar residues; sequence RPSSGMSGFS. Residues 96–449 enclose the IF rod domain; it reads EKQDMRDLNE…KLLEGEESRV (354 aa). The interval 100–135 is coil 1A; the sequence is MRDLNERFANYIEKVRFLEAQNKKLAGELEELKSKW. The segment at 136–145 is linker 1; that stretch reads GKETSAIKEM. A coil 1B region spans residues 146-284; the sequence is YETELEEARK…VHAQELKELA (139 aa). The interval 285–303 is linker 12; it reads ALAYRDTTAENREFWRNEL. The coil 2 stretch occupies residues 304 to 449; it reads AQAIRDIQQE…KLLEGEESRV (146 aa). The tail stretch occupies residues 450 to 511; the sequence is GMKQIVEQVV…EEKKSMGSSD (62 aa). The segment at 479–511 is disordered; that stretch reads GYEATGGITTTTTTSSQERRSMSEEKKSMGSSD. Positions 483 to 492 are enriched in low complexity; the sequence is TGGITTTTTT. Basic and acidic residues predominate over residues 495-511; sequence QERRSMSEEKKSMGSSD.

It belongs to the intermediate filament family.

Functionally, major squid neurofilament protein. In Doryteuthis pealeii (Longfin inshore squid), this protein is 60 kDa neurofilament protein.